A 255-amino-acid polypeptide reads, in one-letter code: tRNA (guanine-N(1)-)-methyltransferase (255 aa).

Residues G113 and 133 to 138 (IGDYVL) each bind S-adenosyl-L-methionine.

The protein belongs to the RNA methyltransferase TrmD family. As to quaternary structure, homodimer.

Its subcellular location is the cytoplasm. It carries out the reaction guanosine(37) in tRNA + S-adenosyl-L-methionine = N(1)-methylguanosine(37) in tRNA + S-adenosyl-L-homocysteine + H(+). Specifically methylates guanosine-37 in various tRNAs. This chain is tRNA (guanine-N(1)-)-methyltransferase, found in Klebsiella pneumoniae (strain 342).